We begin with the raw amino-acid sequence, 465 residues long: GTPase Der (465 aa).

2 EngA-type G domains span residues 3-167 (PLVA…PEEG) and 179-352 (IRIA…ESAN). GTP-binding positions include 9–16 (GRPNVGKS), 57–61 (DTGGI), 119–122 (NKID), 185–192 (GRPNVGKS), 232–236 (DTAGL), and 297–300 (NKWD). The region spanning 353 to 437 (KTFTTSEVNK…PVSFIFREGT (85 aa)) is the KH-like domain.

The protein belongs to the TRAFAC class TrmE-Era-EngA-EngB-Septin-like GTPase superfamily. EngA (Der) GTPase family. As to quaternary structure, associates with the 50S ribosomal subunit.

GTPase that plays an essential role in the late steps of ribosome biogenesis. The polypeptide is GTPase Der (Stenotrophomonas maltophilia (strain K279a)).